A 361-amino-acid polypeptide reads, in one-letter code: Mannose-1-phosphate guanyltransferase (361 aa).

Belongs to the transferase hexapeptide repeat family.

It localises to the cytoplasm. The enzyme catalyses alpha-D-mannose 1-phosphate + GTP + H(+) = GDP-alpha-D-mannose + diphosphate. It functions in the pathway nucleotide-sugar biosynthesis; GDP-alpha-D-mannose biosynthesis; GDP-alpha-D-mannose from alpha-D-mannose 1-phosphate (GTP route): step 1/1. Its function is as follows. Involved in cell wall synthesis where it is required for glycosylation. Involved in cell cycle progression through cell-size checkpoint. The chain is Mannose-1-phosphate guanyltransferase (MPG1) from Kluyveromyces lactis (strain ATCC 8585 / CBS 2359 / DSM 70799 / NBRC 1267 / NRRL Y-1140 / WM37) (Yeast).